We begin with the raw amino-acid sequence, 1211 residues long: Transient receptor potential cation channel subfamily A member 1 homolog (1211 aa).

Topologically, residues M1–R811 are cytoplasmic. 17 ANK repeats span residues N49–A79, D83–T112, E116–P169, Y173–A202, N206–K235, R239–A270, E277–C306, R311–E340, V344–V374, Q378–I407, D411–K440, D473–Q502, D506–L535, M540–A569, Y573–S602, D605–R634, and E638–I669. The helical transmembrane segment at P812–V832 threads the bilayer. Residues R833–V870 are Extracellular-facing. N-linked (GlcNAc...) asparagine glycans are attached at residues N856 and N863. Residues W871–F891 traverse the membrane as a helical segment. The Cytoplasmic portion of the chain corresponds to Q892–K894. A helical membrane pass occupies residues F895–I915. Over T916–N932 the chain is Extracellular. Residues W933–I953 traverse the membrane as a helical segment. Topologically, residues R954 to R975 are cytoplasmic. A helical membrane pass occupies residues F976–Q996. Residues N997–I1004 are Extracellular-facing. The pore-forming intramembrane region spans F1005 to F1025. At H1026–L1048 the chain is on the extracellular side. Residues F1049–V1069 form a helical membrane-spanning segment. The Cytoplasmic segment spans residues D1070–I1193. The stretch at E1149–A1191 forms a coiled coil.

The protein belongs to the transient receptor (TC 1.A.4) family. As to quaternary structure, homotetramer. In terms of tissue distribution, expressed in many sensory neurons, including OLQ and IL1 neurons.

It is found in the cell membrane. Functionally, receptor-activated non-selective cation channel involved in the nose-touch response and foraging behavior. Contributes to the neural responses of sensory neurons to touch, particularly after repeated mechanical stimulation. Has no apparent role in thermosensory or chemosensory behaviors. The sequence is that of Transient receptor potential cation channel subfamily A member 1 homolog (trpa-1) from Caenorhabditis elegans.